Consider the following 688-residue polypeptide: Transcriptional regulatory protein GAT1 (688 aa).

5 disordered regions span residues 83-125 (NHNS…SPMI), 259-278 (TSAS…NNSS), 343-438 (FTGI…GVSC), 482-565 (IKKR…NLDK), and 639-678 (LMTM…TANN). The span at 259–271 (TSASITSPTSTFS) shows a compositional bias: low complexity. Positions 359-368 (FDNKPKDDHF) are enriched in basic and acidic residues. Positions 369 to 379 (NTSLSVSQQQP) are enriched in polar residues. The span at 382 to 397 (KKSKRKSTITKSKKKA) shows a compositional bias: basic residues. A compositionally biased stretch (low complexity) spans 402–428 (TTITSTGSTITTKSTNSNSTGKGTATG). The segment at 438–462 (CTNCGTKTTPLWRRNPQGQPLCNAC) adopts a GATA-type zinc-finger fold. Composition is skewed to low complexity over residues 488-510 (GNNN…NNKS), 529-543 (TNNT…SKSP), 552-565 (FDNN…NLDK), 639-654 (LMTM…LSTT), and 662-678 (NNEG…TANN).

It localises to the nucleus. Transcriptional regulator of nitrogen utilization required for nitrogen catabolite repression and utilization of isoleucine, tyrosine and tryptophan as nitrogen sources. Controls expression of the MEP2 ammonium permease, the DUR1,2 urea amidolyase, and the transcription factor STP1, which in turn mediates SAP2 expression, a long-known virulence attribute of C.albicans. Influences the filamentation process depending upon the nitrogen sources available. Required for virulence in a mouse systemic infection model. The sequence is that of Transcriptional regulatory protein GAT1 (GAT1) from Candida albicans (strain SC5314 / ATCC MYA-2876) (Yeast).